The primary structure comprises 138 residues: Beta-galactosidase (138 aa).

It belongs to the glycosyl hydrolase 2 family.

It carries out the reaction Hydrolysis of terminal non-reducing beta-D-galactose residues in beta-D-galactosides.. In Rhizobium radiobacter (Agrobacterium tumefaciens), this protein is Beta-galactosidase (lacZ).